The sequence spans 520 residues: MLAKGLSLRSVLAKGCQPFLSPTWQSSVLATGGGANISTNSPRPFNEIPSPGDNGWLNLYHFWRENGTHRIHYHHMQNFQKYGPIYREKLGNKDSVYILDPEDAAQLFLSEGPYPERYLVPPWVAYHQYYKRPIGVLFKSSEAWKKDRLVLNQEVMAPEAIKNFVPLLEGVVQDFINVLHRRIKQQKSGNFSGDISDDLFRFAFESITSVVFGERLGMLEEIVDPESQRFIDAIYQMFHTSVPMLNLPPELFRFFRTKTWKEHAAAWDMIFKKADDYTQTFYWDLRQKQEFSKYPGVLYSLLGGNKLPFKNIQANITEMLAGGVDTTSMTLQWSLYEMAHNLKVQEMLRAEVLAARRQAQGDMVKMVQLVPLLKASIKETLRLHPISVTVQRYLVDDLVLRNYRIPAKMLVQVANYAMGREPSFFPNPNKFDPTRWLEKSKNTTHFRYLSFGWGVRQCLGRRIAELEMTIFLINVLENFRIELQSLHDVGTKFNLILMPEKPILFNLQPLKKDLGTTTNR.

The transit peptide at 1 to 36 (MLAKGLSLRSVLAKGCQPFLSPTWQSSVLATGGGAN) directs the protein to the mitochondrion. Heme is bound at residue C458.

Belongs to the cytochrome P450 family. As to quaternary structure, interacts with FDX1/adrenodoxin. Requires heme as cofactor.

It localises to the mitochondrion inner membrane. It carries out the reaction 6 reduced [adrenodoxin] + cholesterol + 3 O2 + 6 H(+) = 4-methylpentanal + pregnenolone + 6 oxidized [adrenodoxin] + 4 H2O. It catalyses the reaction 2 reduced [adrenodoxin] + cholesterol + O2 + 2 H(+) = (22R)-hydroxycholesterol + 2 oxidized [adrenodoxin] + H2O. The enzyme catalyses (22R)-hydroxycholesterol + 2 reduced [adrenodoxin] + O2 + 2 H(+) = (20R,22R)-20,22-dihydroxycholesterol + 2 oxidized [adrenodoxin] + H2O. The catalysed reaction is (20R,22R)-20,22-dihydroxycholesterol + 2 reduced [adrenodoxin] + O2 + 2 H(+) = 4-methylpentanal + pregnenolone + 2 oxidized [adrenodoxin] + 2 H2O. It functions in the pathway lipid metabolism; C21-steroid hormone metabolism. The protein operates within steroid metabolism; cholesterol metabolism. Its function is as follows. A cytochrome P450 monooxygenase that catalyzes the side-chain hydroxylation and cleavage of cholesterol to pregnenolone, the precursor of most steroid hormones. Catalyzes three sequential oxidation reactions of cholesterol, namely the hydroxylation at C22 followed with the hydroxylation at C20 to yield 20R,22R-hydroxycholesterol that is further cleaved between C20 and C22 to yield the C21-steroid pregnenolone and 4-methylpentanal. Mechanistically, uses molecular oxygen inserting one oxygen atom into a substrate and reducing the second into a water molecule. Two electrons are provided by NADPH via a two-protein mitochondrial transfer system comprising flavoprotein FDXR (adrenodoxin/ferredoxin reductase) and nonheme iron-sulfur protein FDX1 or FDX2 (adrenodoxin/ferredoxin). The polypeptide is Cholesterol side-chain cleavage enzyme, mitochondrial (CYP11A1) (Mesocricetus auratus (Golden hamster)).